A 198-amino-acid polypeptide reads, in one-letter code: Adenylyl-sulfate kinase (198 aa).

31–38 lines the ATP pocket; the sequence is GLSGAGKS. The active-site Phosphoserine intermediate is the S105.

The protein belongs to the APS kinase family.

It catalyses the reaction adenosine 5'-phosphosulfate + ATP = 3'-phosphoadenylyl sulfate + ADP + H(+). It participates in sulfur metabolism; hydrogen sulfide biosynthesis; sulfite from sulfate: step 2/3. Its function is as follows. Catalyzes the synthesis of activated sulfate. This Shewanella amazonensis (strain ATCC BAA-1098 / SB2B) protein is Adenylyl-sulfate kinase.